We begin with the raw amino-acid sequence, 330 residues long: Peptide transport system ATP-binding protein SapD (330 aa).

An ABC transporter domain is found at 6–259 (IRNLTIEFKT…PHHPYTQALI (254 aa)). 40-47 (GESGSGKS) is a binding site for ATP.

The protein belongs to the ABC transporter superfamily.

It is found in the cell inner membrane. Functionally, involved in a peptide intake transport system that plays a role in the resistance to antimicrobial peptides. The protein is Peptide transport system ATP-binding protein SapD (sapD) of Escherichia coli O157:H7.